Consider the following 365-residue polypeptide: Sulfate/thiosulfate import ATP-binding protein CysA (365 aa).

The 235-residue stretch at 3–237 folds into the ABC transporter domain; it reads IEIANIKKSF…PATRFVLEFM (235 aa). Position 35-42 (35-42) interacts with ATP; the sequence is GPSGSGKT.

It belongs to the ABC transporter superfamily. Sulfate/tungstate importer (TC 3.A.1.6) family. The complex is composed of two ATP-binding proteins (CysA), two transmembrane proteins (CysT and CysW) and a solute-binding protein (CysP).

The protein resides in the cell inner membrane. The catalysed reaction is sulfate(out) + ATP + H2O = sulfate(in) + ADP + phosphate + H(+). It carries out the reaction thiosulfate(out) + ATP + H2O = thiosulfate(in) + ADP + phosphate + H(+). In terms of biological role, part of the ABC transporter complex CysAWTP involved in sulfate/thiosulfate import. Responsible for energy coupling to the transport system. In Shigella flexneri, this protein is Sulfate/thiosulfate import ATP-binding protein CysA.